A 591-amino-acid chain; its full sequence is 5'-nucleotidase domain-containing protein DDB_G0275467 (591 aa).

Composition is skewed to low complexity over residues 38-50 (STTTTSGIKSYST) and 68-78 (QHQQQQPQQHQ). Residues 38-88 (STTTTSGIKSYSTHNRSNNDTHTSKSNTIDQHQQQQPQQHQNNDNKHLFTP) are disordered. The active-site Nucleophile is the Asp-165. Residues Asp-165 and Asp-167 each coordinate Mg(2+). Asp-167 (proton donor) is an active-site residue. 305-313 (TAAVGKVHL) is a substrate binding site. Asp-450 serves as a coordination point for Mg(2+).

The protein belongs to the 5'(3')-deoxyribonucleotidase family. The cofactor is Mg(2+).

The chain is 5'-nucleotidase domain-containing protein DDB_G0275467 from Dictyostelium discoideum (Social amoeba).